An 843-amino-acid polypeptide reads, in one-letter code: MSAGSRNKHSKFRNDDQLDISKEEFSRIKEALGNEEFRKLFFDYVDEIQDPANRKIYEEEITQLEKERGVEVRFIHPQPGFVVKTSLDGELKCFINIASSPEIEAPHNEVATNPENGNRGLSWYIPMAQTSSRDDADAKNNHCKVFDVVFHPDALHLAKRNSQFRKCLVDTALDAVEREYQVSLDRANLKFPKLDYKGIARPTVIRKLAENPTAEQLEPHPLQNIYPTAPPTSNPEPRVHPMKTKAAPVPEFTIPRYSIKHSHDVDLSEYTDELDAKLHVTVPRNLVVEIELPLLRSTAECQLDVTSKSVYLLSEKPGAKYRLKMDLPFTVDDKAGSARFDTDLRRLSITLPVVRSSVPQQRDMHDTLRHFSREDSGVELHSNSESPVEEEEADADLSDSKADTSETVTPTATPVHSAPTPFLKKSVHYQLPAKFDCNVLDNVMAFVLHVANVQPDSIEQLREQRSLHIQFATIGSGYYPTHYAFYVELPADEEGGSAIENVEAEAWDNNVVLKLCLSSQSKSPIRYMAGLDATDLNEYPVHGQYTVKPKRRDAQNKESAPLDVKFDHNKESLEVTIRPVPSATEEDEVEEQHEESHEEHQQHAQNKKPSKKQRKRNKKERSLSESACEDIVQEQHAENPAPPAKNFLKLPQRKQRSYSECNDSSVGSGASQRGILKRFSRYGPRPSMSDSCSSIDDYSSSYSCSVDASGASLFSQSFGGIPEEDRSDAGLSESCKKTVRFNDHITKQVFRLDSSILGQRKKNQKRRDLKLRAQQRRLSEGDSVDYEESRGDALKPQGKASNKGNKLHDSGLDLTGTAAGHGSHSDADAKNAMMFEMDEDDVM.

Disordered regions lie at residues proline 212–methionine 242, phenylalanine 371–serine 417, tyrosine 545–glutamine 672, and lysine 761–methionine 843. The residue at position 376 (serine 376) is a Phosphoserine. Residues proline 387–leucine 397 are compositionally biased toward acidic residues. A compositionally biased stretch (basic and acidic residues) spans valine 564–leucine 573. The span at threonine 584 to histidine 593 shows a compositional bias: acidic residues. Basic residues predominate over residues glutamine 605–lysine 619. Positions tyrosine 658 to serine 671 are enriched in polar residues. Basic residues predominate over residues lysine 761–glutamine 775. Residue serine 779 is modified to Phosphoserine.

Belongs to the PIH1 family. Kintoun subfamily. In terms of assembly, interacts with Pp1alpha-96A, Pp1-87B, Pp1-13C and flw.

The protein localises to the cytoplasm. Its function is as follows. Required for cytoplasmic pre-assembly of axonemal dyneins, thereby playing a central role in motility in cilia and flagella. Involved in pre-assembly of dynein arm complexes in the cytoplasm before intraflagellar transport loads them for the ciliary compartment. In Drosophila ananassae (Fruit fly), this protein is Protein kintoun.